The chain runs to 318 residues: Ferrochelatase (318 aa).

Residues His-186 and Glu-264 each coordinate Fe cation.

Belongs to the ferrochelatase family.

It localises to the cytoplasm. The catalysed reaction is heme b + 2 H(+) = protoporphyrin IX + Fe(2+). Its pathway is porphyrin-containing compound metabolism; protoheme biosynthesis; protoheme from protoporphyrin-IX: step 1/1. Its function is as follows. Catalyzes the ferrous insertion into protoporphyrin IX. The protein is Ferrochelatase of Chlamydia felis (strain Fe/C-56) (Chlamydophila felis).